Reading from the N-terminus, the 277-residue chain is Cell death abnormality protein 2 (277 aa).

One can recognise an SH2 domain in the interval 14-112 (FYFPGMSRED…EASLLSAYKK (99 aa)). The SH3 1 domain maps to 113–173 (PIIEVVVGTF…PANYVQVQSG (61 aa)). A disordered region spans residues 179-217 (RISKGTSQSSIGSSGNGAERFSSTSTSSENAEAHPTLPT). Residues 182-206 (KGTSQSSIGSSGNGAERFSSTSTSS) are compositionally biased toward low complexity. Positions 214–275 (TLPTTAKVTF…PFTYIRFNTA (62 aa)) constitute an SH3 2 domain.

This sequence belongs to the CRK family. As to quaternary structure, interacts with ced-5 (via C-terminus which contains a candidate SH3-binding, proline-rich region). Forms a ternary complex with ced-5 and ced-12. Interacts (via SH-2 domain) with src-1 (when activated and phosphorylated at 'Tyr-416').

Its function is as follows. Required for cell migration and engulfment of cell corpses but not for programmed cell death/apoptosis. Also has a role in the migration of the 2 gonadal distal tip cells (DTCs). The polypeptide is Cell death abnormality protein 2 (Caenorhabditis briggsae).